The following is a 366-amino-acid chain: Chorismate synthase (366 aa).

Residues Arg-47 and Arg-53 each contribute to the NADP(+) site. FMN contacts are provided by residues Arg-124–Ser-126, Gly-286, Lys-301–Thr-305, and Arg-327.

The protein belongs to the chorismate synthase family. As to quaternary structure, homotetramer. FMNH2 serves as cofactor.

It catalyses the reaction 5-O-(1-carboxyvinyl)-3-phosphoshikimate = chorismate + phosphate. Its pathway is metabolic intermediate biosynthesis; chorismate biosynthesis; chorismate from D-erythrose 4-phosphate and phosphoenolpyruvate: step 7/7. Functionally, catalyzes the anti-1,4-elimination of the C-3 phosphate and the C-6 proR hydrogen from 5-enolpyruvylshikimate-3-phosphate (EPSP) to yield chorismate, which is the branch point compound that serves as the starting substrate for the three terminal pathways of aromatic amino acid biosynthesis. This reaction introduces a second double bond into the aromatic ring system. The protein is Chorismate synthase of Microcystis aeruginosa (strain NIES-843 / IAM M-2473).